A 100-amino-acid chain; its full sequence is MAKKGMLEREKKRQNLVYKYNSRRQALKNSIKYSSSFSETSLLKKELEKLPLNSMKIRLRNRCFVTGKPRGFYRNFGLSRNMLRYMGHECLIPGLMKASW.

Belongs to the universal ribosomal protein uS14 family. In terms of assembly, part of the 30S ribosomal subunit.

It localises to the plastid. The protein localises to the chloroplast. Binds 16S rRNA, required for the assembly of 30S particles. This Bigelowiella natans (Pedinomonas minutissima) protein is Small ribosomal subunit protein uS14c.